The chain runs to 503 residues: Probable apyrase 4 (503 aa).

The span at 1 to 14 shows a compositional bias: low complexity; that stretch reads MQRSNARSRSNINS. A disordered region spans residues 1 to 39; it reads MQRSNARSRSNINSDMVDPPEVQTSPGNHRSSPSTAAKP. Residues 1 to 45 are Cytoplasmic-facing; it reads MQRSNARSRSNINSDMVDPPEVQTSPGNHRSSPSTAAKPKSKRTK. Residues 46 to 66 traverse the membrane as a helical; Signal-anchor for type II membrane protein segment; that stretch reads SIIFVIVACVTIALGLLFIGY. The Extracellular segment spans residues 67–503; sequence SILRSGRNRR…DLSNVAKYKI (437 aa). 83–93 serves as a coordination point for ATP; the sequence is VIIDGGSSGTR. Residue Glu-206 is the Proton acceptor of the active site. Position 230-240 (230-240) interacts with ATP; the sequence is GIVELGGASAQ. 3 N-linked (GlcNAc...) asparagine glycosylation sites follow: Asn-261, Asn-293, and Asn-338.

This sequence belongs to the GDA1/CD39 NTPase family. Requires Ca(2+) as cofactor. In terms of tissue distribution, expressed both in the primary root and lateral root but not in the rosette leaves.

The protein localises to the membrane. The catalysed reaction is a ribonucleoside 5'-triphosphate + 2 H2O = a ribonucleoside 5'-phosphate + 2 phosphate + 2 H(+). Its function is as follows. Catalyzes the hydrolysis of phosphoanhydride bonds of nucleoside tri- and di-phosphates. This is Probable apyrase 4 (APY4) from Arabidopsis thaliana (Mouse-ear cress).